Reading from the N-terminus, the 341-residue chain is Thromboxane A2 receptor (341 aa).

Residues 1-29 are Extracellular-facing; it reads MWLNSTSLGACFRPVNITLQERRAIASPW. N-linked (GlcNAc...) asparagine glycans are attached at residues Asn-4 and Asn-16. A helical transmembrane segment spans residues 30 to 52; sequence FAASFCALGLGSNLLALSVLAGA. Over 53-65 the chain is Cytoplasmic; that stretch reads RPGAGPRSSFLAL. Residues 66 to 86 form a helical membrane-spanning segment; the sequence is LCGLVLTDFLGLLVTGAVVAS. The Extracellular portion of the chain corresponds to 87-105; that stretch reads QHAALLDWRATDPGCRLCH. Cys-104 and Cys-181 are disulfide-bonded. A helical transmembrane segment spans residues 106 to 127; it reads FMGAAMVFFGLCPLLLGAAMAA. Residues 128 to 147 are Cytoplasmic-facing; that stretch reads ERFVGITRPFSRPAATSRRA. Residues 148 to 170 form a helical membrane-spanning segment; the sequence is WATVGLVWVGAGTLGLLPLLGLG. Residues 171 to 191 lie on the Extracellular side of the membrane; that stretch reads RYSVQYPGSWCFLTLGAERGD. A helical transmembrane segment spans residues 192 to 217; the sequence is VAFGLMFALLGSVSVGLSLLLNTVSV. Over 218 to 244 the chain is Cytoplasmic; it reads ATLCRVYHAREATQRPRDCEVEMMVQL. A helical transmembrane segment spans residues 245 to 268; the sequence is VGIMVVATVCWMPLLVFILQTLLQ. The Extracellular portion of the chain corresponds to 269–287; it reads TLPVMSPSGQLLRTTERQL. Residues 288–309 form a helical membrane-spanning segment; sequence LIYLRVATWNQILDPWVYILFR. Residues 310 to 341 are Cytoplasmic-facing; it reads RSVLRRLHPRFTSQLQAVSLHSPPTQAMLSGP. Ser-328 is modified (phosphoserine).

This sequence belongs to the G-protein coupled receptor 1 family. In terms of assembly, interacts with RPGRIP1L. Interacts with RACK1; the interaction regulates TBXA2R cell surface expression. In terms of tissue distribution, in the brain, expressed in all types of glial cells. In the kidney, expressed in the mesangial cells of the glomerulus, smooth muscle cells of the renal arterioles, and in transitional cell epithelium of renal pelvis.

Its subcellular location is the cell membrane. Receptor for thromboxane A2 (TXA2), a potent stimulator of platelet aggregation. The activity of this receptor is mediated by a G-protein that activates a phosphatidylinositol-calcium second messenger system. In the kidney, the binding of TXA2 to glomerular TP receptors causes intense vasoconstriction. Activates phospholipase C and adenylyl cyclase. The polypeptide is Thromboxane A2 receptor (Tbxa2r) (Rattus norvegicus (Rat)).